We begin with the raw amino-acid sequence, 194 residues long: ATP-dependent Clp protease proteolytic subunit (194 aa).

Serine 98 functions as the Nucleophile in the catalytic mechanism. Histidine 123 is an active-site residue.

Belongs to the peptidase S14 family. In terms of assembly, fourteen ClpP subunits assemble into 2 heptameric rings which stack back to back to give a disk-like structure with a central cavity, resembling the structure of eukaryotic proteasomes.

It localises to the cytoplasm. The enzyme catalyses Hydrolysis of proteins to small peptides in the presence of ATP and magnesium. alpha-casein is the usual test substrate. In the absence of ATP, only oligopeptides shorter than five residues are hydrolyzed (such as succinyl-Leu-Tyr-|-NHMec, and Leu-Tyr-Leu-|-Tyr-Trp, in which cleavage of the -Tyr-|-Leu- and -Tyr-|-Trp bonds also occurs).. In terms of biological role, cleaves peptides in various proteins in a process that requires ATP hydrolysis. Has a chymotrypsin-like activity. Plays a major role in the degradation of misfolded proteins. The protein is ATP-dependent Clp protease proteolytic subunit of Syntrophus aciditrophicus (strain SB).